Here is a 949-residue protein sequence, read N- to C-terminus: Coiled-coil domain-containing protein 66 (949 aa).

A phosphothreonine mark is found at Thr115 and Thr121. At Ser369 the chain carries Phosphoserine. The stretch at 474 to 558 (QVEEKCRKKQ…EQRIRELAQK (85 aa)) forms a coiled coil. A mediates localization to cilia, centrosomes and spindle microtubules and the interaction with PCM1, CEP290, CEP104 and CSPP1 region spans residues 570-949 (GVDTIQIEYN…NQEENFGSSF (380 aa)). Ser606 carries the phosphoserine modification. 2 disordered regions span residues 691 to 714 (QTKH…KRYI) and 789 to 809 (SFSK…RTQQ).

As to quaternary structure, homodimer; disulfide-linked. Interacts with CEP290. Interacts with PCM1. Interacts with ARMC9, TOGARAM1, CSPP1 and CEP104. Interacts with CDK5RAP2, CEP152, CEP192, TBG1 and PRC1.

It is found in the cytoplasm. The protein localises to the cytoskeleton. Its subcellular location is the microtubule organizing center. It localises to the centrosome. The protein resides in the centriolar satellite. It is found in the cell projection. The protein localises to the cilium. Its subcellular location is the cilium basal body. It localises to the cilium axoneme. The protein resides in the photoreceptor inner segment. It is found in the photoreceptor outer segment. In terms of biological role, microtubule-binding protein required for ciliogenesis. May function in ciliogenesis by mediating the transport of proteins like BBS4 to the cilium, but also through the organization of the centriolar satellites. Required for the assembly of signaling-competent cilia with proper structure and length. Mediates this function in part by regulating transition zone assembly and basal body recruitment of the IFT-B complex. Cooperates with the ciliopathy proteins CSPP1 and CEP104 during cilium length regulation. Plays two important roles during cell division. First, is required for mitotic progression via regulation of spindle assembly, organization and orientation, levels of spindle microtubules (MTs), kinetochore-fiber integrity, and chromosome alignment. Second, functions during cytokinesis in part by regulating assembly and organization of central spindle and midbody MTs Plays a role in retina morphogenesis and/or homeostasis. The protein is Coiled-coil domain-containing protein 66 of Pongo abelii (Sumatran orangutan).